Consider the following 134-residue polypeptide: Retinol-binding protein 2 (134 aa).

All-trans-retinol is bound by residues K41 and Q109.

Belongs to the calycin superfamily. Fatty-acid binding protein (FABP) family. As to expression, expressed in prenatal liver, intestine and lung, and in adult intestine.

It localises to the cytoplasm. Intracellular transport of retinol. The sequence is that of Retinol-binding protein 2 (Rbp2) from Mus musculus (Mouse).